The chain runs to 421 residues: Testin (421 aa).

The region spanning 92–199 (MILTNPVAAK…GDVKLPCEMD (108 aa)) is the PET domain. Positions 133–164 (EKQPVAGSEGAQYRKKQLAKQLPAHDQDPSKC) are disordered. Positions 155 to 164 (PAHDQDPSKC) are enriched in basic and acidic residues. LIM zinc-binding domains follow at residues 234–297 (YSCY…CDSE), 299–359 (PRCA…NHAV), and 362–421 (QGCH…KRMS).

Belongs to the prickle / espinas / testin family. In terms of assembly, interacts via LIM domain 1 with ZYX. Interacts (via LIM domain 3) with ENAH and VASP. Interacts with ALKBH4, talin, actin, alpha-actinin, GRIP1 and PXN. Interacts (via LIM domain 2) with ACTL7A (via N-terminus). Heterodimer with ACTL7A; the heterodimer interacts with ENAH to form a heterotrimer.

The protein resides in the cytoplasm. It localises to the cell junction. Its subcellular location is the focal adhesion. Its function is as follows. Scaffold protein that may play a role in cell adhesion, cell spreading and in the reorganization of the actin cytoskeleton. Plays a role in the regulation of cell proliferation. May act as a tumor suppressor. The polypeptide is Testin (TES) (Pan troglodytes (Chimpanzee)).